A 314-amino-acid chain; its full sequence is WD repeat domain-containing protein 83 (314 aa).

WD repeat units follow at residues 23-62 (CNQG…LLKT), 65-104 (GHGY…VVRK), 107-146 (GHAG…PEAI), 151-188 (EAKD…MCAD), 189-228 (YLGS…LLGE), 231-272 (GHQN…LVLK), and 275-313 (VGKA…EEGG).

It belongs to the WD repeat MORG1 family.

It is found in the cytoplasm. Functionally, molecular scaffold protein for various multimeric protein complexes. Acts as a module in the assembly of a multicomponent scaffold for the ERK pathway, linking ERK responses to specific agonists. Also involved in response to hypoxia by acting as a negative regulator of HIF1A/HIF-1-alpha. The polypeptide is WD repeat domain-containing protein 83 (wdr83) (Xenopus tropicalis (Western clawed frog)).